The primary structure comprises 190 residues: Threonylcarbamoyl-AMP synthase (190 aa).

In terms of domain architecture, YrdC-like spans 7 to 190 (GDAIAAAIDV…ALTGELFRQG (184 aa)).

It belongs to the SUA5 family. TsaC subfamily.

The protein resides in the cytoplasm. It carries out the reaction L-threonine + hydrogencarbonate + ATP = L-threonylcarbamoyladenylate + diphosphate + H2O. Required for the formation of a threonylcarbamoyl group on adenosine at position 37 (t(6)A37) in tRNAs that read codons beginning with adenine. Catalyzes the conversion of L-threonine, HCO(3)(-)/CO(2) and ATP to give threonylcarbamoyl-AMP (TC-AMP) as the acyladenylate intermediate, with the release of diphosphate. The protein is Threonylcarbamoyl-AMP synthase of Shigella flexneri.